We begin with the raw amino-acid sequence, 543 residues long: Protein DETOXIFICATION 47, chloroplastic (543 aa).

A chloroplast-targeting transit peptide spans 1–30; the sequence is MLIKSQRLTLFSPLLSKTRRIPVNSHQTLV. Residues 55 to 94 adopt a coiled-coil conformation; it reads VIRRRIKLERVTRNCVRIDREIDEEEEEEEKERGDLVKQS. 12 consecutive transmembrane segments (helical) span residues 107–127, 135–155, 181–201, 228–248, 256–276, 278–298, 319–339, 342–362, 406–426, 443–463, 472–492, and 497–517; these read GPAM…TVVI, LAAL…FMFL, VLLF…RLFG, GLAW…LGMK, ALAA…LFLG, GIAG…YMMM, LWKI…KIAF, FIIY…QVMA, IIGA…PGLF, LLIP…LEGT, FVSS…MFVT, and GLLG…GLYL.

Belongs to the multi antimicrobial extrusion (MATE) (TC 2.A.66.1) family. Preferentially expressed in the epidermal cells.

It localises to the plastid. It is found in the chloroplast membrane. Its function is as follows. Functions as a multidrug and toxin extrusion transporter in the export of salicylic acid (SA) from the chloroplast to the cytoplasm. Plays an essential function in plant defense via the pathogen-induced salicylic acid (SA) accumulation. Also acts as a key component of the Age-related resistance (ARR) pathway. The chain is Protein DETOXIFICATION 47, chloroplastic from Arabidopsis thaliana (Mouse-ear cress).